The sequence spans 562 residues: Nicotinate phosphoribosyltransferase (562 aa).

Nicotinate contacts are provided by Y36, F183, and T225. At H228 the chain carries Phosphohistidine. Position 397 (T397) interacts with 5-phospho-alpha-D-ribose 1-diphosphate.

This sequence belongs to the NAPRTase family. It depends on Mg(2+) as a cofactor. Requires Mn(2+) as cofactor. Post-translationally, transiently phosphorylated on a His residue during the reaction cycle. Phosphorylation strongly increases the affinity for substrates and increases the rate of nicotinate D-ribonucleotide production. Dephosphorylation regenerates the low-affinity form of the enzyme, leading to product release.

The catalysed reaction is nicotinate + 5-phospho-alpha-D-ribose 1-diphosphate + ATP + H2O = nicotinate beta-D-ribonucleotide + ADP + phosphate + diphosphate. It functions in the pathway cofactor biosynthesis; NAD(+) biosynthesis; nicotinate D-ribonucleotide from nicotinate: step 1/1. Functionally, catalyzes the first step in the biosynthesis of NAD from nicotinic acid, the ATP-dependent synthesis of beta-nicotinate D-ribonucleotide from nicotinate and 5-phospho-D-ribose 1-phosphate. Helps prevent cellular oxidative stress via its role in NAD biosynthesis. The polypeptide is Nicotinate phosphoribosyltransferase (Caenorhabditis elegans).